The primary structure comprises 162 residues: Sec-independent protein translocase protein TatB (162 aa).

The chain crosses the membrane as a helical span at residues 1–21; it reads MFDIGFSELILIFVVGLVVLG. Residues 136 to 162 are disordered; that stretch reads LTAYYPPDDDLVSPSTTKLEQDKQNVN.

This sequence belongs to the TatB family. In terms of assembly, the Tat system comprises two distinct complexes: a TatABC complex, containing multiple copies of TatA, TatB and TatC subunits, and a separate TatA complex, containing only TatA subunits. Substrates initially bind to the TatABC complex, which probably triggers association of the separate TatA complex to form the active translocon.

The protein resides in the cell inner membrane. Functionally, part of the twin-arginine translocation (Tat) system that transports large folded proteins containing a characteristic twin-arginine motif in their signal peptide across membranes. Together with TatC, TatB is part of a receptor directly interacting with Tat signal peptides. TatB may form an oligomeric binding site that transiently accommodates folded Tat precursor proteins before their translocation. The polypeptide is Sec-independent protein translocase protein TatB (Haemophilus ducreyi (strain 35000HP / ATCC 700724)).